Consider the following 715-residue polypeptide: Polyribonucleotide nucleotidyltransferase (715 aa).

Residues D491 and D497 each contribute to the Mg(2+) site. Residues 558–617 (PKIMTMTINPEKIRDVIGPQGRVINKIIEETGVKIDIEQDGRVFIASINHEANLRAKQII) form the KH domain. The S1 motif domain maps to 627-695 (GQVYLGTVKR…DQGRVNLSRK (69 aa)).

The protein belongs to the polyribonucleotide nucleotidyltransferase family. Requires Mg(2+) as cofactor.

It localises to the cytoplasm. The enzyme catalyses RNA(n+1) + phosphate = RNA(n) + a ribonucleoside 5'-diphosphate. In terms of biological role, involved in mRNA degradation. Catalyzes the phosphorolysis of single-stranded polyribonucleotides processively in the 3'- to 5'-direction. The chain is Polyribonucleotide nucleotidyltransferase from Brevibacillus brevis (strain 47 / JCM 6285 / NBRC 100599).